The chain runs to 466 residues: tRNA-2-methylthio-N(6)-dimethylallyladenosine synthase (466 aa).

The region spanning 5 to 125 (RKLHIKSYGC…LPELLARAGR (121 aa)) is the MTTase N-terminal domain. [4Fe-4S] cluster contacts are provided by Cys14, Cys50, Cys88, Cys166, Cys170, and Cys173. The Radical SAM core domain maps to 152 to 384 (RARGVSAFVT…QSLIDSQQAA (233 aa)). Positions 387-449 (KAAIGTVVDV…RYSLLGELVA (63 aa)) constitute a TRAM domain.

Belongs to the methylthiotransferase family. MiaB subfamily. Monomer. [4Fe-4S] cluster is required as a cofactor.

The protein localises to the cytoplasm. The enzyme catalyses N(6)-dimethylallyladenosine(37) in tRNA + (sulfur carrier)-SH + AH2 + 2 S-adenosyl-L-methionine = 2-methylsulfanyl-N(6)-dimethylallyladenosine(37) in tRNA + (sulfur carrier)-H + 5'-deoxyadenosine + L-methionine + A + S-adenosyl-L-homocysteine + 2 H(+). In terms of biological role, catalyzes the methylthiolation of N6-(dimethylallyl)adenosine (i(6)A), leading to the formation of 2-methylthio-N6-(dimethylallyl)adenosine (ms(2)i(6)A) at position 37 in tRNAs that read codons beginning with uridine. The chain is tRNA-2-methylthio-N(6)-dimethylallyladenosine synthase from Bradyrhizobium sp. (strain BTAi1 / ATCC BAA-1182).